Here is a 1190-residue protein sequence, read N- to C-terminus: MTSRFGKTYSRKGGNGSSKFDEVFSNKRTTLSTKWGETTFMAKLGQKRPNFKPDIQEIPKKPKVEEESTGDPFGFDSDDESLPVSSKNLAQVKCSSYSESSEAAQLEEVTSVLEANSKISHVVVEDTVVSDKCFPLEDTLLGKEKSTNRIVEDDASISSCNKLITSDKVENFHEEHEKNSHHIHKNADDSTKKPNAETTVASEIKETNDTWNSQFGKRPESPSEISPIKGSVRTGLFEWDNDFEDIRSEDCILSLDSDPLLEMKDDDFKNRLENLNEAIEEDIVQSVLRPTNCRTYCRANKTKSSQGASNFDKLMDGTSQALAKANSESSKDGLNQAKKGGVSCGTSFRGTVGRTRDYTVLHPSCLSVCNVTIQDTMERSMDEFTASTPADLGEAGRLRKKADIATSKTTTRFRPSNTKSKKDVKLEFFGFEDHETGGDEGGSGSSNYKIKYFGFDDLSESEDDEDDDCQVERKTSKKRTKTAPSPSLQPPPESNDNSQDSQSGTNNAENLDFTEDLPGVPESVKKPINKQGDKSKENTRKIFSGPKRSPTKAVYNARHWNHPDSEELPGPPVVKPQSVTVRLSSKEPNQKDDGVFKAPAPPSKVIKTVTIPTQPYQDIVTALKCRREDKELYTVVQHVKHFNDVVEFGENQEFTDDIEYLLSGLKSTQPLNTRCLSVISLATKCAMPSFRMHLRAHGMVAMVFKTLDDSQHHQNLSLCTAALMYILSRDRLNMDLDRASLDLMIRLLELEQDASSAKLLNEKDMNKIKEKIRRLCETVHNKHLDLENITTGHLAMETLLSLTSKRAGDWFKEELRLLGGLDHIVDKVKECVDHLSRDEDEEKLVASLWGAERCLRVLESVTVHNPENQSYLIAYKDSQLIVSSAKALQHCEELIQQYNRAEDSICLADSKPLPHQNVTNHVGKAVEDCMRAIIGVLLNLTNDNEWGSTKTGEQDGLIGTALNCVLQVPKYLPQEQRFDIRVLGLGLLINLVEYSARNRHCLVNMETSCSFDSSICSGEGDDSLRIGGQVHAVQALVQLFLERERAAQLAESKTDELIKDAPTTQHDKSGEWQETSGEIQWVSTEKTDGTEEKHKKEEEDEELDLNKALQHAGKHMEDCIVASYTALLLGCLCQESPINVTTVREYLPEGDFSIMTEMLKKFLSFMNLTCAVGTTGQKSISRVIEYLEHC.

Disordered stretches follow at residues 1-23 and 46-82; these read MTSRFGKTYSRKGGNGSSKFDEV and QKRPNFKPDIQEIPKKPKVEEESTGDPFGFDSDDESL. The interval 1-659 is mediates interaction with the cohesin complex; the sequence is MTSRFGKTYS…ENQEFTDDIE (659 aa). Residues 54–66 show a composition bias toward basic and acidic residues; it reads DIQEIPKKPKVEE. An FGF motif 1 motif is present at residues 73 to 75; the sequence is FGF. Residue Ser77 is modified to Phosphoserine. The residue at position 168 (Lys168) is an N6-acetyllysine. 3 positions are modified to phosphoserine: Ser221, Ser223, and Ser226. Residues 260 to 286 adopt a coiled-coil conformation; sequence LLEMKDDDFKNRLENLNEAIEEDIVQS. Ser347 and Ser380 each carry phosphoserine. The short motif at 429–431 is the FGF motif 2 element; sequence FGF. Residue Ser443 is modified to Phosphoserine. The FGF motif 3 signature appears at 453–455; sequence FGF. Phosphoserine is present on residues Ser459 and Ser461. The segment covering 459-469 has biased composition (acidic residues); it reads SESEDDEDDDC. The interval 459–553 is disordered; that stretch reads SESEDDEDDD…SGPKRSPTKA (95 aa). Polar residues predominate over residues 494–509; sequence SNDNSQDSQSGTNNAE. Residues 531–540 show a composition bias toward basic and acidic residues; it reads QGDKSKENTR. Positions 626 to 1169 constitute a WAPL domain; sequence RREDKELYTV…KKFLSFMNLT (544 aa). The stretch at 749 to 782 forms a coiled coil; the sequence is ELEQDASSAKLLNEKDMNKIKEKIRRLCETVHNK. Residue Ser904 is modified to Phosphoserine.

It belongs to the WAPL family. Interacts with the cohesin complex throughout the cell cycle; interacts with both chromatin-bound and soluble pools of the complex. Interacts with RAD21; the interaction is direct. Interacts with PDS5A; the interaction is direct, cohesin-dependent and competitive with CDCA5/SORORIN. Interacts (via FGF motifs) with PDS5B; the interaction is direct. Interacts with a SMC1 protein (SMC1A or SMC1B) and SMC3. In terms of assembly, (Microbial infection) Isoform 2 interacts with Epstein-Barr virus EBNA2. Post-translationally, deubiquitinated by USP37; leading to stabilization. In terms of tissue distribution, isoform 1 is highly expressed in uterine cervix tumor. Isoform 2 is widely expressed with a high level in skeletal muscle and heart.

Its subcellular location is the nucleus. The protein resides in the chromosome. The protein localises to the cytoplasm. Regulator of sister chromatid cohesion in mitosis which negatively regulates cohesin association with chromatin. Involved in both sister chromatid cohesion during interphase and sister-chromatid resolution during early stages of mitosis. Couples DNA replication to sister chromatid cohesion. Cohesion ensures that chromosome partitioning is accurate in both meiotic and mitotic cells and plays an important role in DNA repair. The protein is Wings apart-like protein homolog of Homo sapiens (Human).